A 640-amino-acid chain; its full sequence is Threonine--tRNA ligase (640 aa).

The 61-residue stretch at 1 to 61 (MPTITLPDGS…ERDASLQIIT (61 aa)) folds into the TGS domain. A catalytic region spans residues 242–533 (DHRRIGKQLD…LIEHYAGAFP (292 aa)). 3 residues coordinate Zn(2+): C333, H384, and H510.

It belongs to the class-II aminoacyl-tRNA synthetase family. In terms of assembly, homodimer. Zn(2+) is required as a cofactor.

It localises to the cytoplasm. It catalyses the reaction tRNA(Thr) + L-threonine + ATP = L-threonyl-tRNA(Thr) + AMP + diphosphate + H(+). Catalyzes the attachment of threonine to tRNA(Thr) in a two-step reaction: L-threonine is first activated by ATP to form Thr-AMP and then transferred to the acceptor end of tRNA(Thr). Also edits incorrectly charged L-seryl-tRNA(Thr). This is Threonine--tRNA ligase from Stutzerimonas stutzeri (strain A1501) (Pseudomonas stutzeri).